The sequence spans 428 residues: Dihydroorotase (428 aa).

Positions 59 and 61 each coordinate Zn(2+). Substrate contacts are provided by residues 61–63 (HLR) and Asn93. The Zn(2+) site is built by Asp151, His178, and His231. Substrate is bound at residue Asn277. Residue Asp304 participates in Zn(2+) binding. Asp304 is a catalytic residue. Residues His308 and 322-323 (FG) contribute to the substrate site.

It belongs to the metallo-dependent hydrolases superfamily. DHOase family. Class I DHOase subfamily. Requires Zn(2+) as cofactor.

It carries out the reaction (S)-dihydroorotate + H2O = N-carbamoyl-L-aspartate + H(+). The protein operates within pyrimidine metabolism; UMP biosynthesis via de novo pathway; (S)-dihydroorotate from bicarbonate: step 3/3. Catalyzes the reversible cyclization of carbamoyl aspartate to dihydroorotate. The sequence is that of Dihydroorotase from Bacillus cereus (strain ATCC 10987 / NRS 248).